The sequence spans 463 residues: MAESRTFTGLLAATAVGVYLLVLAGATTTLTDAAAACTTWPLCDGPVDVTNTALLVAWGHRLVAAAVGLLVVAMAVVGLRSGCRGRVKAAIIIGAVLYPVQIALGAIVATSAETALPGAHLALGMGIFGSFVLALAWHLEAETGSDDETPVKNPTPAPEPAGDDTPDRTPALTFRERLVGTASAYFRLMKPRLMWLLCLVAAAGMALAAGQTLTVRTVLLTLGGGVLSIGASGTFNHVLERDIDKRMDRTSDRPIATHQIPVRNALAFGLLLSFASLWLFWQVNALVAVLGLTAIVFYSVIYTLVLKPNTVQNTVLGGAAGALPALIGWVAADGSVGLPGVVLAVIIFLWTPAHFYNLALAYKDDYEAGGFPMMPVVRGETETRKHIVYYLGATLIASGILGVLTPLGWLYAVTSVLLGAVFLWAVVLLHREQTEAAAFRAFHASNAYLGAVLIAIVVDALAL.

The interval 1 to 193 (MAESRTFTGL…AYFRLMKPRL (193 aa)) is unknown. Transmembrane regions (helical) follow at residues 6–26 (TFTG…LAGA), 54–74 (LLVA…VVAM), 89–109 (AAII…AIVA), and 115–135 (ALPG…VLAL). A disordered region spans residues 144–170 (GSDDETPVKNPTPAPEPAGDDTPDRTP). 9 helical membrane passes run 193–213 (LMWL…GQTL), 218–238 (VLLT…FNHV), 265–285 (ALAF…QVNA), 286–306 (LVAV…TLVL), 314–334 (TVLG…AADG), 336–356 (VGLP…AHFY), 387–407 (IVYY…LTPL), 409–429 (WLYA…VVLL), and 441–461 (AFHA…VDAL). Positions 194 to 460 (MWLLCLVAAA…AVLIAIVVDA (267 aa)) are protoheme IX prenyltransferase.

It in the C-terminal section; belongs to the UbiA prenyltransferase family. Protoheme IX farnesyltransferase subfamily.

It is found in the cell membrane. The catalysed reaction is heme b + (2E,6E)-farnesyl diphosphate + H2O = Fe(II)-heme o + diphosphate. Its pathway is porphyrin-containing compound metabolism; heme O biosynthesis; heme O from protoheme: step 1/1. Its function is as follows. Converts heme B (protoheme IX) to heme O by substitution of the vinyl group on carbon 2 of heme B porphyrin ring with a hydroxyethyl farnesyl side group. In Haloarcula marismortui (strain ATCC 43049 / DSM 3752 / JCM 8966 / VKM B-1809) (Halobacterium marismortui), this protein is Protoheme IX farnesyltransferase (ctaB).